The primary structure comprises 401 residues: Imidazolonepropionase (401 aa).

Residues His-66 and His-68 each coordinate Fe(3+). Positions 66 and 68 each coordinate Zn(2+). 4-imidazolone-5-propanoate is bound by residues Arg-75, Tyr-138, and His-171. Residue Tyr-138 participates in N-formimidoyl-L-glutamate binding. Residue His-236 participates in Fe(3+) binding. His-236 provides a ligand contact to Zn(2+). Gln-239 is a 4-imidazolone-5-propanoate binding site. Fe(3+) is bound at residue Asp-311. Residue Asp-311 coordinates Zn(2+). N-formimidoyl-L-glutamate-binding residues include Asn-313 and Gly-315. A 4-imidazolone-5-propanoate-binding site is contributed by Thr-316.

The protein belongs to the metallo-dependent hydrolases superfamily. HutI family. It depends on Zn(2+) as a cofactor. Fe(3+) serves as cofactor.

Its subcellular location is the cytoplasm. It carries out the reaction 4-imidazolone-5-propanoate + H2O = N-formimidoyl-L-glutamate. Its pathway is amino-acid degradation; L-histidine degradation into L-glutamate; N-formimidoyl-L-glutamate from L-histidine: step 3/3. In terms of biological role, catalyzes the hydrolytic cleavage of the carbon-nitrogen bond in imidazolone-5-propanoate to yield N-formimidoyl-L-glutamate. It is the third step in the universal histidine degradation pathway. This chain is Imidazolonepropionase, found in Pseudomonas entomophila (strain L48).